The primary structure comprises 353 residues: Photosystem II protein D1 (353 aa).

Thr2 is subject to N-acetylthreonine. Thr2 is subject to Phosphothreonine. 3 helical membrane passes run 29 to 46 (YIGW…TATS), 118 to 133 (HFLL…EWEL), and 142 to 156 (WIAV…AATA). A chlorophyll a-binding site is contributed by His118. Tyr126 serves as a coordination point for pheophytin a. Positions 170 and 189 each coordinate [CaMn4O5] cluster. The chain crosses the membrane as a helical span at residues 197–218 (FHMLGVAGVFGGSLFSAMHGSL). His198 provides a ligand contact to chlorophyll a. A quinone contacts are provided by residues His215 and 264-265 (SF). His215 contributes to the Fe cation binding site. His272 is a binding site for Fe cation. A helical membrane pass occupies residues 274 to 288 (FLAAWPVIGIWFTAL). His332, Glu333, Asp342, and Ala344 together coordinate [CaMn4O5] cluster. Positions 345 to 353 (AVEAPSTNG) are excised as a propeptide.

It belongs to the reaction center PufL/M/PsbA/D family. PSII is composed of 1 copy each of membrane proteins PsbA, PsbB, PsbC, PsbD, PsbE, PsbF, PsbH, PsbI, PsbJ, PsbK, PsbL, PsbM, PsbT, PsbX, PsbY, PsbZ, Psb30/Ycf12, at least 3 peripheral proteins of the oxygen-evolving complex and a large number of cofactors. It forms dimeric complexes. The D1/D2 heterodimer binds P680, chlorophylls that are the primary electron donor of PSII, and subsequent electron acceptors. It shares a non-heme iron and each subunit binds pheophytin, quinone, additional chlorophylls, carotenoids and lipids. D1 provides most of the ligands for the Mn4-Ca-O5 cluster of the oxygen-evolving complex (OEC). There is also a Cl(-1) ion associated with D1 and D2, which is required for oxygen evolution. The PSII complex binds additional chlorophylls, carotenoids and specific lipids. is required as a cofactor. Post-translationally, tyr-161 forms a radical intermediate that is referred to as redox-active TyrZ, YZ or Y-Z. C-terminally processed by CTPA; processing is essential to allow assembly of the oxygen-evolving complex and thus photosynthetic growth.

It is found in the plastid. Its subcellular location is the chloroplast thylakoid membrane. It catalyses the reaction 2 a plastoquinone + 4 hnu + 2 H2O = 2 a plastoquinol + O2. Its function is as follows. Photosystem II (PSII) is a light-driven water:plastoquinone oxidoreductase that uses light energy to abstract electrons from H(2)O, generating O(2) and a proton gradient subsequently used for ATP formation. It consists of a core antenna complex that captures photons, and an electron transfer chain that converts photonic excitation into a charge separation. The D1/D2 (PsbA/PsbD) reaction center heterodimer binds P680, the primary electron donor of PSII as well as several subsequent electron acceptors. This is Photosystem II protein D1 from Buxus microphylla (Littleleaf boxwood).